Consider the following 67-residue polypeptide: Probable Sec-independent protein translocase protein TatE (67 aa).

The chain crosses the membrane as a helical span at residues 1–21; sequence MEGISIAKLLIIGALIVLLFG. Residues 44 to 67 form a disordered region; sequence KDEDTSAARTTAEETPAERVSHKD.

Belongs to the TatA/E family. TatE subfamily.

Its subcellular location is the cell inner membrane. Part of the twin-arginine translocation (Tat) system that transports large folded proteins containing a characteristic twin-arginine motif in their signal peptide across membranes. TatE shares overlapping functions with TatA. The chain is Probable Sec-independent protein translocase protein TatE from Pantoea ananatis (strain LMG 20103).